The sequence spans 303 residues: Recombination-associated protein RdgC (303 aa).

The protein belongs to the RdgC family.

The protein resides in the cytoplasm. It is found in the nucleoid. In terms of biological role, may be involved in recombination. The sequence is that of Recombination-associated protein RdgC from Yersinia enterocolitica serotype O:8 / biotype 1B (strain NCTC 13174 / 8081).